We begin with the raw amino-acid sequence, 464 residues long: Argininosuccinate lyase (464 aa).

It belongs to the lyase 1 family. Argininosuccinate lyase subfamily.

It localises to the cytoplasm. The enzyme catalyses 2-(N(omega)-L-arginino)succinate = fumarate + L-arginine. It participates in amino-acid biosynthesis; L-arginine biosynthesis; L-arginine from L-ornithine and carbamoyl phosphate: step 3/3. The protein is Argininosuccinate lyase of Chlorobium phaeobacteroides (strain DSM 266 / SMG 266 / 2430).